The primary structure comprises 675 residues: Zinc finger CCCH domain-containing protein 65 (675 aa).

A disordered region spans residues 294–320 (TFSNEAKMDPGTSIKKRSAPSKDAKAR). The span at 307-320 (IKKRSAPSKDAKAR) shows a compositional bias: basic residues. A coiled-coil region spans residues 314–342 (SKDAKARKRAKARIKRAQERIALGVKKLK). 3 C3H1-type zinc fingers span residues 350–377 (PKPI…HDTI), 384–406 (PCCY…HDLS), and 409–432 (PCNN…HKGT). 2 disordered regions span residues 487–572 (LKPS…LPLG) and 586–612 (EQKT…SHIQ). Low complexity predominate over residues 490–504 (SSHSNQRNSSDASSS). Residues 543 to 567 (KASSASKPNTDNSDSQTLKQSQQGS) show a composition bias toward polar residues. A compositionally biased stretch (basic and acidic residues) spans 586–595 (EQKTLNREPQ). Polar residues predominate over residues 597 to 612 (PASSKNLKTTPSSHIQ).

Functionally, possesses RNA-binding and ribonuclease activities in vitro. The protein is Zinc finger CCCH domain-containing protein 65 (EMB1789) of Arabidopsis thaliana (Mouse-ear cress).